The sequence spans 64 residues: Large ribosomal subunit protein bL35c (64 aa).

The protein belongs to the bacterial ribosomal protein bL35 family.

It is found in the plastid. The protein localises to the chloroplast. The polypeptide is Large ribosomal subunit protein bL35c (Trieres chinensis (Marine centric diatom)).